Here is a 462-residue protein sequence, read N- to C-terminus: 3-isopropylmalate dehydratase large subunit (462 aa).

[4Fe-4S] cluster is bound by residues cysteine 337, cysteine 397, and cysteine 400.

It belongs to the aconitase/IPM isomerase family. LeuC type 1 subfamily. Heterodimer of LeuC and LeuD. [4Fe-4S] cluster serves as cofactor.

It catalyses the reaction (2R,3S)-3-isopropylmalate = (2S)-2-isopropylmalate. It participates in amino-acid biosynthesis; L-leucine biosynthesis; L-leucine from 3-methyl-2-oxobutanoate: step 2/4. Functionally, catalyzes the isomerization between 2-isopropylmalate and 3-isopropylmalate, via the formation of 2-isopropylmaleate. This is 3-isopropylmalate dehydratase large subunit from Listeria welshimeri serovar 6b (strain ATCC 35897 / DSM 20650 / CCUG 15529 / CIP 8149 / NCTC 11857 / SLCC 5334 / V8).